Reading from the N-terminus, the 162-residue chain is Small ribosomal subunit protein uS13 (162 aa).

The tract at residues 142–162 (RGQRTKSTGRRGSTVGVSRKK) is disordered.

Belongs to the universal ribosomal protein uS13 family. In terms of assembly, part of the 30S ribosomal subunit. Forms a loose heterodimer with protein S19. Forms two bridges to the 50S subunit in the 70S ribosome.

Its function is as follows. Located at the top of the head of the 30S subunit, it contacts several helices of the 16S rRNA. In the 70S ribosome it contacts the 23S rRNA (bridge B1a) and protein L5 of the 50S subunit (bridge B1b), connecting the 2 subunits; these bridges are implicated in subunit movement. The sequence is that of Small ribosomal subunit protein uS13 from Methanosarcina acetivorans (strain ATCC 35395 / DSM 2834 / JCM 12185 / C2A).